The chain runs to 102 residues: RNA-binding protein Hfq (102 aa).

In terms of domain architecture, Sm spans 9–68; sequence DPFLNALRRERVPVSIYLVNGIKLQGQIESFDQFVILLKNTVSQMVYKHAISTVVPSRPV. The segment at 63–102 is disordered; that stretch reads VPSRPVSHHSNNAGGGASNNYHHGSNVQGSTAQQDSEETE. Residues 70 to 88 are compositionally biased toward low complexity; sequence HHSNNAGGGASNNYHHGSN.

The protein belongs to the Hfq family. Homohexamer.

Its function is as follows. RNA chaperone that binds small regulatory RNA (sRNAs) and mRNAs to facilitate mRNA translational regulation in response to envelope stress, environmental stress and changes in metabolite concentrations. Also binds with high specificity to tRNAs. This Salmonella choleraesuis (strain SC-B67) protein is RNA-binding protein Hfq.